Reading from the N-terminus, the 367-residue chain is Queuine tRNA-ribosyltransferase (367 aa).

The Proton acceptor role is filled by aspartate 89. Substrate is bound by residues 89–93 (DSGGF), aspartate 143, glutamine 185, and glycine 212. Residues 243–249 (GVGTPSD) are RNA binding. Catalysis depends on aspartate 262, which acts as the Nucleophile. The interval 267–271 (TRNAR) is RNA binding; important for wobble base 34 recognition. Zn(2+)-binding residues include cysteine 300, cysteine 302, cysteine 305, and histidine 331.

The protein belongs to the queuine tRNA-ribosyltransferase family. As to quaternary structure, homodimer. Within each dimer, one monomer is responsible for RNA recognition and catalysis, while the other monomer binds to the replacement base PreQ1. Zn(2+) serves as cofactor.

The enzyme catalyses 7-aminomethyl-7-carbaguanine + guanosine(34) in tRNA = 7-aminomethyl-7-carbaguanosine(34) in tRNA + guanine. Its pathway is tRNA modification; tRNA-queuosine biosynthesis. Functionally, catalyzes the base-exchange of a guanine (G) residue with the queuine precursor 7-aminomethyl-7-deazaguanine (PreQ1) at position 34 (anticodon wobble position) in tRNAs with GU(N) anticodons (tRNA-Asp, -Asn, -His and -Tyr). Catalysis occurs through a double-displacement mechanism. The nucleophile active site attacks the C1' of nucleotide 34 to detach the guanine base from the RNA, forming a covalent enzyme-RNA intermediate. The proton acceptor active site deprotonates the incoming PreQ1, allowing a nucleophilic attack on the C1' of the ribose to form the product. After dissociation, two additional enzymatic reactions on the tRNA convert PreQ1 to queuine (Q), resulting in the hypermodified nucleoside queuosine (7-(((4,5-cis-dihydroxy-2-cyclopenten-1-yl)amino)methyl)-7-deazaguanosine). The sequence is that of Queuine tRNA-ribosyltransferase from Thiobacillus denitrificans (strain ATCC 25259 / T1).